Consider the following 398-residue polypeptide: ATP-dependent RNA helicase eIF4A (398 aa).

A Q motif motif is present at residues 25 to 53; sequence DSFDTMNLKPELLRGVYAYGFERPSAIQQ. Residues 56–226 form the Helicase ATP-binding domain; the sequence is IMPVIKGHDV…TKFMRDPVRI (171 aa). 69 to 76 lines the ATP pocket; sequence AQSGTGKT. Residues 174–177 carry the DEAD box motif; sequence DEAD. One can recognise a Helicase C-terminal domain in the interval 237–398; sequence GIKQFYIAVE…EMPMNVADLI (162 aa).

This sequence belongs to the DEAD box helicase family. eIF4A subfamily. As to quaternary structure, component of the eIF4F complex, which composition varies with external and internal environmental conditions. It is composed of at least eIF4A, eIF4E and eIF4G.

The protein resides in the cytoplasm. It carries out the reaction ATP + H2O = ADP + phosphate + H(+). Its function is as follows. ATP-dependent RNA helicase which is a subunit of the eIF4F complex involved in cap recognition and is required for mRNA binding to ribosome. In the current model of translation initiation, eIF4A unwinds RNA secondary structures in the 5'-UTR of mRNAs which is necessary to allow efficient binding of the small ribosomal subunit, and subsequent scanning for the initiator codon. The protein is ATP-dependent RNA helicase eIF4A (tif1) of Botryotinia fuckeliana (strain B05.10) (Noble rot fungus).